The primary structure comprises 712 residues: Lactoperoxidase (712 aa).

Residues 1-22 form the signal peptide; sequence MWVCLQLPVFLASVTLFEVAAS. Positions 23–100 are excised as a propeptide; it reads DTIAQAASTT…WEESFKRLRR (78 aa). Asn106 carries N-linked (GlcNAc...) (complex) asparagine; alternate glycosylation. Asn106 carries an N-linked (GlcNAc...) (hybrid) asparagine; alternate glycan. Intrachain disulfides connect Cys123-Cys284, Cys132-Cys145, Cys246-Cys256, and Cys250-Cys274. Asn212 carries N-linked (GlcNAc...) (complex) asparagine; alternate glycosylation. A glycan (N-linked (GlcNAc...) (high mannose) asparagine; alternate) is linked at Asn212. Position 225 (Asp225) interacts with heme b. His226 functions as the Proton acceptor in the catalytic mechanism. Asp227 lines the Ca(2+) pocket. Ca(2+) is bound by residues Thr301, Phe303, Asp305, and Ser307. Ser315 carries the phosphoserine modification. Asn322 carries N-linked (GlcNAc...) (high mannose) asparagine glycosylation. Cys354 and Cys365 form a disulfide bridge. Asn358 carries an N-linked (GlcNAc...) asparagine glycan. A heme b-binding site is contributed by Glu375. The N-linked (GlcNAc...) (complex) asparagine; alternate glycan is linked to Asn449. N-linked (GlcNAc...) (hybrid) asparagine; alternate glycosylation occurs at Asn449. Asn449 is a glycosylation site (N-linked (GlcNAc...) (high mannose) asparagine; alternate). His468 serves as a coordination point for heme b. Tyr482 carries the 3'-nitrotyrosine modification. Disulfide bonds link Cys573-Cys630 and Cys671-Cys696.

Belongs to the peroxidase family. XPO subfamily. The cofactor is Ca(2+). Heme b is required as a cofactor. As to expression, mammary gland; milk.

It localises to the secreted. It is found in the cytoplasm. It carries out the reaction 2 a phenolic donor + H2O2 = 2 a phenolic radical donor + 2 H2O. The enzyme catalyses thiocyanate + H2O2 + H(+) = hypothiocyanous acid + H2O. It catalyses the reaction iodide + H2O2 = hypoiodite + H2O. Heme-containing oxidoreductase which catalyzes the conversion of thiocyanate (SCN(-)) into antimicrobial agent hypothiocyanous acid (OSCN(-)) in the presence of hydrogen peroxide (H2O2). Also involved in the conversion of iodide (I(-)) into hypoiodite (IO(-)) in the presence of H2O2. Responsible for the inactivation of a wide range of micro-organisms and hence, important component of defense mechanism. Shows antibacterial properties against E.coli, K.pneumoniae, P.aeruginosa, S.sonnei, S.saphrophyticus, S.epidermidis and S.dysenteriae. May protect the udder from infection and may promote growth in newborns. May be implicated in airway host defense against infection. May contribute to maintaining an appropriate H2O2 cellular level, therefore protecting cells from H2O2-caused injuries and inflammation. The polypeptide is Lactoperoxidase (Bubalus bubalis (Domestic water buffalo)).